A 236-amino-acid polypeptide reads, in one-letter code: Small ribosomal subunit protein uS2c (236 aa).

The protein belongs to the universal ribosomal protein uS2 family.

It localises to the plastid. Its subcellular location is the chloroplast. This is Small ribosomal subunit protein uS2c (rps2) from Acorus calamus var. americanus (American sweet flag).